The sequence spans 333 residues: Acyl-CoA wax alcohol acyltransferase 2 (333 aa).

3 consecutive transmembrane segments (helical) span residues 15-35 (VFAVFQWSFSALLITTTVIAV), 38-58 (YLVVFTPYWPVTVLILTWLAF), and 130-150 (IFPGITPYILTLGAFFWMPFL).

It belongs to the diacylglycerol acyltransferase family. As to quaternary structure, monomer. In terms of tissue distribution, highly expressed in skin, where it is primarily restricted to undifferentiated peripheral sebocytes. Also expressed at lower level in other tissues except pancreas.

It localises to the endoplasmic reticulum membrane. The catalysed reaction is a long chain fatty alcohol + a fatty acyl-CoA = a wax ester + CoA. It carries out the reaction all-trans-retinol + an acyl-CoA = an all-trans-retinyl ester + CoA. It catalyses the reaction an acyl-CoA + a 1,2-diacyl-sn-glycerol = a triacyl-sn-glycerol + CoA. The enzyme catalyses 11-cis-retinol + a fatty acyl-CoA = 11-cis-retinyl ester + CoA. The catalysed reaction is 9-cis-retinol + a fatty acyl-CoA = 9-cis-retinyl ester + CoA. It carries out the reaction 13-cis-retinol + a fatty acyl-CoA = 13-cis-retinyl ester + CoA. It catalyses the reaction a 1-acylglycerol + an acyl-CoA = a 1,2-diacylglycerol + CoA. The enzyme catalyses 1-O-alkylglycerol + an acyl-CoA = 1-O-alkyl-3-acylglycerol + CoA. The catalysed reaction is a 2-acylglycerol + an acyl-CoA = a 1,2-diacyl-sn-glycerol + CoA. It carries out the reaction 2-(9Z-octadecenoyl)-glycerol + hexadecanoyl-CoA = 1-hexadecanoyl-2-(9Z-octadecenoyl)-sn-glycerol + CoA. It catalyses the reaction 1,2-di-(9Z-octadecenoyl)-sn-glycerol + hexadecanoyl-CoA = 1,2-di-(9Z)-octadecenoyl-3-hexadecanoyl-sn-glycerol + CoA. The enzyme catalyses hexadecan-1-ol + hexadecanoyl-CoA = hexadecanyl hexadecanoate + CoA. The catalysed reaction is hexadecane-1,2-diol + hexadecanoyl-CoA = 2-hydroxyhexadecyl hexadecanoate + CoA. It carries out the reaction 9-cis-retinol + hexadecanoyl-CoA = 9-cis-retinyl hexadecanoate + CoA. It catalyses the reaction all-trans-retinol + hexadecanoyl-CoA = all-trans-retinyl hexadecanoate + CoA. The enzyme catalyses 1,2-di-(9Z-octadecenoyl)-sn-glycerol + (9Z)-octadecenoyl-CoA = 1,2,3-tri-(9Z-octadecenoyl)-glycerol + CoA. The catalysed reaction is hexadecan-1-ol + (9Z)-octadecenoyl-CoA = hexadecanyl (9Z)-octadecenoate + CoA. It carries out the reaction (9Z)-hexadecen-1-ol + (9Z)-octadecenoyl-CoA = 1-O-(9Z)-hexadecenyl (9Z)-octadecenoate + CoA. It catalyses the reaction octadecan-1-ol + (9Z)-octadecenoyl-CoA = 1-O-octadecyl (9Z)-octadecenoate + CoA. The enzyme catalyses (9Z)-octadecen-1-ol + (9Z)-octadecenoyl-CoA = 1-O-(9Z)-octadecenyl (9Z)-octadecenoate + CoA. The catalysed reaction is hexadecan-1-ol + (9Z)-hexadecenoyl-CoA = 1-O-hexadecyl (9Z)-hexadecenoate + CoA. It carries out the reaction hexadecan-1-ol + octadecanoyl-CoA = hexadecanyl octadecanoate + CoA. It catalyses the reaction 11-cis-retinol + hexadecanoyl-CoA = 11-cis-retinyl hexadecanoate + CoA. The enzyme catalyses 1-O-(9Z-octadecenyl)-glycerol + (9Z)-octadecenoyl-CoA = 1-O-(9Z-octadecyl)-3-(9Z-octadecenoyl)-glycerol + CoA. The catalysed reaction is 1-(9Z-octadecenoyl)-glycerol + (9Z)-octadecenoyl-CoA = 1,2-di-(9Z-octadecenoyl)-glycerol + CoA. It carries out the reaction 11-cis-retinol + tetradecanoyl-CoA = 11-cis-retinyl tetradecanoate + CoA. It catalyses the reaction 9-cis-retinol + tetradecanoyl-CoA = 9-cis-retinyl tetradecanoate + CoA. The enzyme catalyses 13-cis-retinol + tetradecanoyl-CoA = 13-cis-retinyl tetradecanoate + CoA. The catalysed reaction is all-trans-retinol + tetradecanoyl-CoA = all-trans-retinyl tetradecanoate + CoA. It carries out the reaction tetradecan-1-ol + tetradecanoyl-CoA = tetradecanyl tetradecanoate + CoA. With respect to regulation, 11-cis retinoids act as allosteric modulators of acyl-CoA retinol O-fatty-acyltransferase (ARAT) activity by suppressing esterification of 9-cis, 13-cis, or all-trans retinols concurrently increasing the enzyme specificity toward 11-cis isomer. Functionally, acyltransferase that catalyzes the formation of ester bonds between fatty alcohols and fatty acyl-CoAs to form wax monoesters. Shows a preference for medium chain acyl-CoAs from C12 to C16 in length and fatty alcohols shorter than C20, as the acyl donors and acceptors, respectively. Also possesses acyl-CoA retinol acyltransferase (ARAT) activity that preferentially esterifies 11-cis-retinol, a chromophore precursor of bleached opsin pigments in cone cells. Shows higher catalytic efficiency toward 11-cis-retinol versus 9-cis-retinol, 13-cis-retinol, and all-trans-retinol substrates. This is Acyl-CoA wax alcohol acyltransferase 2 (AWAT2) from Homo sapiens (Human).